We begin with the raw amino-acid sequence, 372 residues long: MQFFTAIAAISALVAPALALPTQELPQAPTNQTLHVRLIPTGNTMVKAVVTNNGDRPLNLLKFNTIMDENPTAKVNVVHEDGEEVEFTGMLPRYSMRSLPKSVFTRLAPKDSVEHVFDIATVHNLKRSGKYTLSARGAVPVAEGDDTAIIDHVYYQSNDLTMEIDARKAALIPRAFEDTHFAGTLNRRGGLNSTCSPRRYQVIKRALNDARMIASSASKAVSSNPEKFREFFGTTDPNAMKQVSERLMAIAQASVENGPIKWHCFDSRGRCEQNVVAYTLPSRNEVFPCMPFFTESDFTNKCHAQDKPTTLIHEAAHNPSVVQPFCRDHGYGYDHVSRLPPRLALQNADNYSIYAQGKFHLHLPLKVVFSPN.

Residues 1–19 form the signal peptide; that stretch reads MQFFTAIAAISALVAPALA. Residues 20 to 188 constitute a propeptide that is removed on maturation; the sequence is LPTQELPQAP…THFAGTLNRR (169 aa). Cystine bridges form between C195-C264 and C271-C289. Residue H313 coordinates Zn(2+). E314 is an active-site residue. Residues H317 and D328 each contribute to the Zn(2+) site.

Belongs to the peptidase M35 family. Requires Zn(2+) as cofactor.

The protein localises to the secreted. It catalyses the reaction Preferential cleavage of bonds with hydrophobic residues in P1'. Also 3-Asn-|-Gln-4 and 8-Gly-|-Ser-9 bonds in insulin B chain.. Secreted metalloproteinase that allows assimilation of proteinaceous substrates. Shows high activities on basic nuclear substrates such as histone and protamine. May be involved in virulence. This chain is Neutral protease 2 homolog MGYG_06241, found in Arthroderma gypseum (strain ATCC MYA-4604 / CBS 118893) (Microsporum gypseum).